A 91-amino-acid polypeptide reads, in one-letter code: MARVTVEDAVKQVGNRFDLVLVAARRARQIAVQGKDPLVDEENDKPTVIALREIELGLVNNQVMDTQDRYEQQEQEAAELAAVAAIAEGRG.

Belongs to the RNA polymerase subunit omega family. As to quaternary structure, the RNAP catalytic core consists of 2 alpha, 1 beta, 1 beta' and 1 omega subunit. When a sigma factor is associated with the core the holoenzyme is formed, which can initiate transcription.

The catalysed reaction is RNA(n) + a ribonucleoside 5'-triphosphate = RNA(n+1) + diphosphate. In terms of biological role, promotes RNA polymerase assembly. Latches the N- and C-terminal regions of the beta' subunit thereby facilitating its interaction with the beta and alpha subunits. The chain is DNA-directed RNA polymerase subunit omega from Aeromonas hydrophila subsp. hydrophila (strain ATCC 7966 / DSM 30187 / BCRC 13018 / CCUG 14551 / JCM 1027 / KCTC 2358 / NCIMB 9240 / NCTC 8049).